A 191-amino-acid chain; its full sequence is Large ribosomal subunit protein uL6A (191 aa).

It belongs to the universal ribosomal protein uL6 family. Component of the large ribosomal subunit (LSU). Mature yeast ribosomes consist of a small (40S) and a large (60S) subunit. The 40S small subunit contains 1 molecule of ribosomal RNA (18S rRNA) and 33 different proteins (encoded by 57 genes). The large 60S subunit contains 3 rRNA molecules (25S, 5.8S and 5S rRNA) and 46 different proteins (encoded by 81 genes). uL6 lines the binding pocket for eukaryotic elongation factor 2 (eEF2).

The protein resides in the cytoplasm. Its function is as follows. Component of the ribosome, a large ribonucleoprotein complex responsible for the synthesis of proteins in the cell. The small ribosomal subunit (SSU) binds messenger RNAs (mRNAs) and translates the encoded message by selecting cognate aminoacyl-transfer RNA (tRNA) molecules. The large subunit (LSU) contains the ribosomal catalytic site termed the peptidyl transferase center (PTC), which catalyzes the formation of peptide bonds, thereby polymerizing the amino acids delivered by tRNAs into a polypeptide chain. The nascent polypeptides leave the ribosome through a tunnel in the LSU and interact with protein factors that function in enzymatic processing, targeting, and the membrane insertion of nascent chains at the exit of the ribosomal tunnel. The chain is Large ribosomal subunit protein uL6A from Saccharomyces cerevisiae (strain ATCC 204508 / S288c) (Baker's yeast).